The primary structure comprises 237 residues: Large ribosomal subunit protein uL1 (237 aa).

Belongs to the universal ribosomal protein uL1 family. As to quaternary structure, part of the 50S ribosomal subunit.

Functionally, binds directly to 23S rRNA. The L1 stalk is quite mobile in the ribosome, and is involved in E site tRNA release. In terms of biological role, protein L1 is also a translational repressor protein, it controls the translation of the L11 operon by binding to its mRNA. In Myxococcus xanthus (strain DK1622), this protein is Large ribosomal subunit protein uL1.